A 247-amino-acid chain; its full sequence is Ribosomal RNA processing protein 36 homolog (247 aa).

4 disordered regions span residues 1-29, 62-89, 136-188, and 218-247; these read MDNQ…HLKD, RTQG…QRVP, SVEK…RELV, and GKLQ…QVDQ. A compositionally biased stretch (acidic residues) spans 8–23; it reads SSDDESPTDDCSDEGE. Composition is skewed to basic and acidic residues over residues 136 to 153 and 164 to 174; these read SVEK…RKNL and ERSRKSAEAKR. Positions 218 to 240 are enriched in basic residues; that stretch reads GKLQKYLTKRRKKTASKDRRHVP.

The protein belongs to the RRP36 family.

It localises to the nucleus. The protein localises to the nucleolus. Functionally, involved in the early processing steps of the pre-rRNA in the maturation pathway leading to the 18S rRNA. This is Ribosomal RNA processing protein 36 homolog from Nematostella vectensis (Starlet sea anemone).